A 152-amino-acid polypeptide reads, in one-letter code: SsrA-binding protein (152 aa).

The segment at Lys-122 to Asp-152 is disordered. Residues Asp-128 to Asp-152 show a composition bias toward basic and acidic residues.

The protein belongs to the SmpB family.

It is found in the cytoplasm. Its function is as follows. Required for rescue of stalled ribosomes mediated by trans-translation. Binds to transfer-messenger RNA (tmRNA), required for stable association of tmRNA with ribosomes. tmRNA and SmpB together mimic tRNA shape, replacing the anticodon stem-loop with SmpB. tmRNA is encoded by the ssrA gene; the 2 termini fold to resemble tRNA(Ala) and it encodes a 'tag peptide', a short internal open reading frame. During trans-translation Ala-aminoacylated tmRNA acts like a tRNA, entering the A-site of stalled ribosomes, displacing the stalled mRNA. The ribosome then switches to translate the ORF on the tmRNA; the nascent peptide is terminated with the 'tag peptide' encoded by the tmRNA and targeted for degradation. The ribosome is freed to recommence translation, which seems to be the essential function of trans-translation. This is SsrA-binding protein from Caulobacter sp. (strain K31).